Reading from the N-terminus, the 378-residue chain is Heme chaperone HemW (378 aa).

A Radical SAM core domain is found at 1 to 237; sequence MVKLPPLSLY…LTAAGYQQYE (237 aa). Tyr10 lines the S-adenosyl-L-methionine pocket. [4Fe-4S] cluster-binding residues include Cys16, Cys20, and Cys23. Residues Gly66, 67–68, Glu99, Gln126, Arg138, and Asp163 contribute to the S-adenosyl-L-methionine site; that span reads GT.

This sequence belongs to the anaerobic coproporphyrinogen-III oxidase family. HemW subfamily. As to quaternary structure, binding of the [4Fe-4S] cofactor promotes dimerization. [4Fe-4S] cluster serves as cofactor.

The protein resides in the cytoplasm. In terms of biological role, probably acts as a heme chaperone, transferring heme to the NarI subunit of the respiratory enzyme nitrate reductase; transfer may be stimulated by NADH. Binds one molecule of heme per monomer, possibly covalently. Heme binding is not affected by either [4Fe-4S] or S-adenosyl-L-methionine (SAM)-binding. Does not have coproporphyrinogen III dehydrogenase activity in vitro. Binds 1 [4Fe-4S] cluster. The cluster is coordinated with 3 cysteines and an exchangeable S-adenosyl-L-methionine. In Escherichia coli (strain K12), this protein is Heme chaperone HemW.